Here is a 349-residue protein sequence, read N- to C-terminus: Guanine nucleotide-binding protein-like alpha-10 subunit (349 aa).

The 317-residue stretch at 33 to 349 (EEIRVLIYGQ…LNITYNSVKN (317 aa)) folds into the G-alpha domain. Positions 36–49 (RVLIYGQKKVGVTT) are G1 motif. The G2 motif stretch occupies residues 168–176 (DLNFIKLTQ). The tract at residues 191–200 (IKMIEMGIQT) is G3 motif. GTP is bound by residues 195 to 199 (EMGIQ) and 266 to 269 (NKKD). Positions 262 to 269 (IVFFNKKD) are G4 motif. The tract at residues 320–325 (NEESEV) is G5 motif.

Belongs to the G-alpha family.

In Dictyostelium discoideum (Social amoeba), this protein is Guanine nucleotide-binding protein-like alpha-10 subunit (gpaJ).